A 644-amino-acid chain; its full sequence is Protein DA1-related 6 (644 aa).

UIM domains are found at residues 119 to 138, 181 to 200, and 244 to 263; these read EEDE…NNRR, DVDE…KGKG, and DEDE…KGQI. Positions 284 to 355 constitute an LIM zinc-binding domain; sequence SLCGGCNFAV…YVCKEKKMKT (72 aa). Positions 572 to 589 are enriched in low complexity; it reads ASSSASSSSRTPPAASAS. Residues 572–591 are disordered; the sequence is ASSSASSSSRTPPAASASKK.

As to quaternary structure, interacts with ubiquitin.

Ubiquitin receptor that probably regulates developmental process. The protein is Protein DA1-related 6 (DAR6) of Arabidopsis thaliana (Mouse-ear cress).